A 293-amino-acid chain; its full sequence is Probable aspartoacylase (293 aa).

The Zn(2+) site is built by His-14 and Glu-17. Substrate is bound by residues Arg-56 and 63–64 (NR). His-106 serves as a coordination point for Zn(2+). Substrate-binding residues include Glu-165 and Tyr-276.

The protein belongs to the AspA/AstE family. Aspartoacylase subfamily. Requires Zn(2+) as cofactor.

The enzyme catalyses an N-acyl-L-aspartate + H2O = a carboxylate + L-aspartate. This chain is Probable aspartoacylase, found in Trichodesmium erythraeum (strain IMS101).